The chain runs to 118 residues: Large ribosomal subunit protein bL20 (118 aa).

Belongs to the bacterial ribosomal protein bL20 family.

Its function is as follows. Binds directly to 23S ribosomal RNA and is necessary for the in vitro assembly process of the 50S ribosomal subunit. It is not involved in the protein synthesizing functions of that subunit. The sequence is that of Large ribosomal subunit protein bL20 from Fervidobacterium nodosum (strain ATCC 35602 / DSM 5306 / Rt17-B1).